The primary structure comprises 365 residues: Anhydro-N-acetylmuramic acid kinase (365 aa).

Residue 12–19 coordinates ATP; that stretch reads GTSMDGMD.

It belongs to the anhydro-N-acetylmuramic acid kinase family.

It catalyses the reaction 1,6-anhydro-N-acetyl-beta-muramate + ATP + H2O = N-acetyl-D-muramate 6-phosphate + ADP + H(+). It functions in the pathway amino-sugar metabolism; 1,6-anhydro-N-acetylmuramate degradation. The protein operates within cell wall biogenesis; peptidoglycan recycling. Catalyzes the specific phosphorylation of 1,6-anhydro-N-acetylmuramic acid (anhMurNAc) with the simultaneous cleavage of the 1,6-anhydro ring, generating MurNAc-6-P. Is required for the utilization of anhMurNAc either imported from the medium or derived from its own cell wall murein, and thus plays a role in cell wall recycling. In Pseudomonas paraeruginosa (strain DSM 24068 / PA7) (Pseudomonas aeruginosa (strain PA7)), this protein is Anhydro-N-acetylmuramic acid kinase.